The chain runs to 442 residues: tRNA(Ile)-lysidine synthase (442 aa).

Residue 27–32 coordinates ATP; the sequence is SGGLDS.

It belongs to the tRNA(Ile)-lysidine synthase family.

It is found in the cytoplasm. It carries out the reaction cytidine(34) in tRNA(Ile2) + L-lysine + ATP = lysidine(34) in tRNA(Ile2) + AMP + diphosphate + H(+). Ligates lysine onto the cytidine present at position 34 of the AUA codon-specific tRNA(Ile) that contains the anticodon CAU, in an ATP-dependent manner. Cytidine is converted to lysidine, thus changing the amino acid specificity of the tRNA from methionine to isoleucine. The protein is tRNA(Ile)-lysidine synthase of Photorhabdus laumondii subsp. laumondii (strain DSM 15139 / CIP 105565 / TT01) (Photorhabdus luminescens subsp. laumondii).